The following is an 84-amino-acid chain: Magnetosome protein MamR (84 aa).

This sequence belongs to the magnetosome MamR family.

The protein localises to the magnetosome. Its function is as follows. May play a role in controlling magnetite number and size. Coexpression of mamLQRBIEMO in a deletion of the 17 gene mamAB operon restores magnetosome vesicle formation but not magnetite biosynthesis. This Magnetospirillum gryphiswaldense (strain DSM 6361 / JCM 21280 / NBRC 15271 / MSR-1) protein is Magnetosome protein MamR.